Consider the following 141-residue polypeptide: uncharacterized protein (141 aa).

The protein belongs to the mimivirus L163/R849 family.

This is an uncharacterized protein from Acanthamoeba polyphaga mimivirus (APMV).